The chain runs to 173 residues: Large ribosomal subunit protein uL10 (173 aa).

It belongs to the universal ribosomal protein uL10 family. As to quaternary structure, part of the ribosomal stalk of the 50S ribosomal subunit. The N-terminus interacts with L11 and the large rRNA to form the base of the stalk. The C-terminus forms an elongated spine to which L12 dimers bind in a sequential fashion forming a multimeric L10(L12)X complex.

Forms part of the ribosomal stalk, playing a central role in the interaction of the ribosome with GTP-bound translation factors. The polypeptide is Large ribosomal subunit protein uL10 (Maridesulfovibrio salexigens (strain ATCC 14822 / DSM 2638 / NCIMB 8403 / VKM B-1763) (Desulfovibrio salexigens)).